The following is a 572-amino-acid chain: Periplasmic pectate lyase (572 aa).

An N-terminal signal peptide occupies residues 1–23 (MKKRALLLSMSVLAMLYIPAGQA).

It belongs to the polysaccharide lyase 2 family.

The protein resides in the periplasm. It catalyses the reaction Eliminative cleavage of (1-&gt;4)-alpha-D-galacturonan to give oligosaccharides with 4-deoxy-alpha-D-galact-4-enuronosyl groups at their non-reducing ends.. It functions in the pathway glycan metabolism; pectin degradation; 2-dehydro-3-deoxy-D-gluconate from pectin: step 2/5. This is Periplasmic pectate lyase (pelY) from Yersinia pseudotuberculosis serotype I (strain IP32953).